The sequence spans 604 residues: Ectonucleoside triphosphate diphosphohydrolase 7 (604 aa).

Over 1 to 28 (MARISFSYLCPASWYFTVPTVSPFLRQR) the chain is Cytoplasmic. Residues 29-49 (VAFLGLFFISCLLLLMLIIDF) form a helical membrane-spanning segment. Residues 50 to 546 (RHWSASLPRD…QAHGSWFRLS (497 aa)) are Vesicular-facing. Glutamate 217 functions as the Proton acceptor in the catalytic mechanism. N-linked (GlcNAc...) asparagine glycosylation occurs at asparagine 330. A disulfide bond links cysteine 448 and cysteine 477. A helical membrane pass occupies residues 547–567 (FVYNHYLFFACILVVLLAIFL). At 568-604 (YLLRLRRIHHRQTRASAPLDLLWLEEVVPMMGVQVGP) the chain is on the cytoplasmic side.

This sequence belongs to the GDA1/CD39 NTPase family. It depends on Ca(2+) as a cofactor. Mg(2+) serves as cofactor.

The protein localises to the cytoplasmic vesicle membrane. The enzyme catalyses a ribonucleoside 5'-triphosphate + H2O = a ribonucleoside 5'-diphosphate + phosphate + H(+). It catalyses the reaction UTP + H2O = UDP + phosphate + H(+). The catalysed reaction is GTP + H2O = GDP + phosphate + H(+). It carries out the reaction CTP + H2O = CDP + phosphate + H(+). Its function is as follows. Catalyzes the hydrolysis of nucleoside triphosphates and diphosphates in a calcium- or magnesium-dependent manner. Preferentially hydrolyzes nucleoside 5'-triphosphates, with substrate preference for UTP &gt; GTP &gt; CTP. Hydrolyzes ATP and nucleoside diphosphates only to a minor extent. The protein is Ectonucleoside triphosphate diphosphohydrolase 7 (ENTPD7) of Homo sapiens (Human).